A 149-amino-acid polypeptide reads, in one-letter code: Myoglobin (149 aa).

Ala2 is subject to N-acetylalanine. Residues 2-143 (ADWDKVNSVW…ICSDIEKEYK (142 aa)) enclose the Globin domain. A heme b-binding site is contributed by His89.

It belongs to the globin family. As to quaternary structure, monomeric.

It localises to the cytoplasm. It is found in the sarcoplasm. The catalysed reaction is Fe(III)-heme b-[protein] + nitric oxide + H2O = Fe(II)-heme b-[protein] + nitrite + 2 H(+). It catalyses the reaction H2O2 + AH2 = A + 2 H2O. In terms of biological role, monomeric heme protein which primary function is to store oxygen and facilitate its diffusion within muscle tissues. Reversibly binds oxygen through a pentacoordinated heme iron and enables its timely and efficient release as needed during periods of heightened demand. Depending on the oxidative conditions of tissues and cells, and in addition to its ability to bind oxygen, it also has a nitrite reductase activity whereby it regulates the production of bioactive nitric oxide. Under stress conditions, like hypoxia and anoxia, it also protects cells against reactive oxygen species thanks to its pseudoperoxidase activity. This is Myoglobin (mb) from Galeorhinus galeus (Tope shark).